The sequence spans 344 residues: Arylacetonitrilase (344 aa).

Residues 5–290 (LRVAVTQAEP…EGIVYADLDL (286 aa)) form the CN hydrolase domain. Residue Glu45 is the Proton acceptor of the active site. Lys126 is an active-site residue. Cys167 functions as the Nucleophile in the catalytic mechanism. The segment at 324–344 (VIPRDEEEPSRKANVVVPKQE) is disordered.

It belongs to the carbon-nitrogen hydrolase superfamily. Nitrilase family.

It catalyses the reaction a nitrile + 2 H2O = a carboxylate + NH4(+). The catalysed reaction is 4-chlorophenylacetonitrile + 2 H2O = 4-chlorophenylacetate + NH4(+). Functionally, nitrilase that hydrolyzes preferentially phenylacetonitrile and (R,S)-mandelonitrile. Also acts on dinitriles like phenylenediacetonitriles (PDAs) 1,2-PDA, 1,3-PDA, and 1,4-PDA, and cyanophenyl acetonitriles (CPAs) 2-CPA and 4-CPA. The protein is Arylacetonitrilase of Macrophomina phaseolina (strain MS6) (Charcoal rot fungus).